The chain runs to 208 residues: Interleukin-6 (208 aa).

Positions 1–27 (MTFLSTSAFSPLAFSLGLLLVVATAFP) are cleaved as a signal peptide. Cys-68 and Cys-74 are disulfide-bonded. Ser-77 carries the post-translational modification Phosphoserine. Cys-97 and Cys-107 are joined by a disulfide.

The protein belongs to the IL-6 superfamily. In terms of assembly, component of a hexamer of two molecules each of IL6, IL6R and IL6ST; first binds to IL6R to associate with the signaling subunit IL6ST. Interacts with IL6R (via the N-terminal ectodomain); this interaction may be affected by IL6R-binding with SORL1, hence decreasing IL6 cis signaling. Interacts with SORL1 (via the N-terminal ectodomain); this interaction leads to IL6 internalization and lysosomal degradation. May form a trimeric complex with the soluble SORL1 ectodomain and soluble IL6R receptor; this interaction might stabilize circulating IL6, hence promoting IL6 trans signaling.

The protein resides in the secreted. In terms of biological role, cytokine with a wide variety of biological functions in immunity, tissue regeneration, and metabolism. Binds to IL6R, then the complex associates to the signaling subunit IL6ST/gp130 to trigger the intracellular IL6-signaling pathway. The interaction with the membrane-bound IL6R and IL6ST stimulates 'classic signaling', whereas the binding of IL6 and soluble IL6R to IL6ST stimulates 'trans-signaling'. Alternatively, 'cluster signaling' occurs when membrane-bound IL6:IL6R complexes on transmitter cells activate IL6ST receptors on neighboring receiver cells. IL6 is a potent inducer of the acute phase response. Rapid production of IL6 contributes to host defense during infection and tissue injury, but excessive IL6 synthesis is involved in disease pathology. In the innate immune response, is synthesized by myeloid cells, such as macrophages and dendritic cells, upon recognition of pathogens through toll-like receptors (TLRs) at the site of infection or tissue injury. In the adaptive immune response, is required for the differentiation of B cells into immunoglobulin-secreting cells. Plays a major role in the differentiation of CD4(+) T cell subsets. Essential factor for the development of T follicular helper (Tfh) cells that are required for the induction of germinal-center formation. Required to drive naive CD4(+) T cells to the Th17 lineage. Also required for proliferation of myeloma cells and the survival of plasmablast cells. Functionally, acts as an essential factor in bone homeostasis and on vessels directly or indirectly by induction of VEGF, resulting in increased angiogenesis activity and vascular permeability. Induces, through 'trans-signaling' and synergistically with IL1B and TNF, the production of VEGF. Involved in metabolic controls, is discharged into the bloodstream after muscle contraction increasing lipolysis and improving insulin resistance. 'Trans-signaling' in central nervous system also regulates energy and glucose homeostasis. Mediates, through GLP-1, crosstalk between insulin-sensitive tissues, intestinal L cells and pancreatic islets to adapt to changes in insulin demand. Also acts as a myokine. Plays a protective role during liver injury, being required for maintenance of tissue regeneration. Also has a pivotal role in iron metabolism by regulating HAMP/hepcidin expression upon inflammation or bacterial infection. Through activation of IL6ST-YAP-NOTCH pathway, induces inflammation-induced epithelial regeneration. This Felis catus (Cat) protein is Interleukin-6 (IL6).